A 904-amino-acid polypeptide reads, in one-letter code: Structural polyprotein (904 aa).

Disordered regions lie at residues 1 to 27 (ADQETNTSNVHNTQLASTSEENSVETE), 35 to 54 (VETPNRINTPMAQDTSSARS), and 320 to 348 (NNSNKMATPVKEKTKNIPKPKTENPKIGP). Polar residues predominate over residues 39–53 (NRINTPMAQDTSSAR). The span at 329–343 (VKEKTKNIPKPKTEN) shows a compositional bias: basic and acidic residues.

The protein belongs to the picornaviruses polyprotein family. Specific enzymatic cleavages in vivo yield mature proteins.

It localises to the virion. It is found in the host cytoplasm. Structural polyprotein: precursor of all the viral capsid proteins. Its function is as follows. Forms, together with protein VP2 and protein VP3, an icosahedral capsid protecting the viral RNA genome. The icosahedral capsid has a pseudo-T=3 symmetry with a diameter of approximately 300 Angstroms, and is composed of 60 copies of each capsid proteins. In terms of biological role, forms, together with protein VP1 and protein VP3, an icosahedral capsid protecting the viral RNA genome. The icosahedral capsid has a pseudo-T=3 symmetry with a diameter of approximately 300 Angstroms, and is composed of 60 copies of each capsid proteins. Functionally, forms, together with protein VP1 and protein VP2, an icosahedral capsid protecting the viral RNA genome. The icosahedral capsid has a pseudo-T=3 symmetry with a diameter of approximately 300 Angstroms, and is composed of 60 copies of each capsid proteins. In Apis mellifera (Honeybee), this protein is Structural polyprotein.